The following is a 691-amino-acid chain: Methionine--tRNA ligase (691 aa).

A 'HIGH' region motif is present at residues 12 to 22 (PYANGSFHIGH). Zn(2+)-binding residues include Cys-143, Cys-146, Cys-156, and Cys-159. A 'KMSKS' region motif is present at residues 341 to 345 (KMSKS). Lys-344 provides a ligand contact to ATP. The tRNA-binding domain occupies 585–691 (DFVKVDLRIA…PGAQPGMRIH (107 aa)).

The protein belongs to the class-I aminoacyl-tRNA synthetase family. MetG type 1 subfamily. As to quaternary structure, homodimer. The cofactor is Zn(2+).

The protein localises to the cytoplasm. It carries out the reaction tRNA(Met) + L-methionine + ATP = L-methionyl-tRNA(Met) + AMP + diphosphate. Is required not only for elongation of protein synthesis but also for the initiation of all mRNA translation through initiator tRNA(fMet) aminoacylation. The sequence is that of Methionine--tRNA ligase from Bordetella avium (strain 197N).